Consider the following 333-residue polypeptide: 4-hydroxy-3-methylbut-2-enyl diphosphate reductase (333 aa).

Cysteine 20 serves as a coordination point for [4Fe-4S] cluster. (2E)-4-hydroxy-3-methylbut-2-enyl diphosphate is bound by residues histidine 49 and histidine 82. Dimethylallyl diphosphate is bound by residues histidine 49 and histidine 82. Positions 49 and 82 each coordinate isopentenyl diphosphate. Cysteine 104 is a [4Fe-4S] cluster binding site. Histidine 132 lines the (2E)-4-hydroxy-3-methylbut-2-enyl diphosphate pocket. Histidine 132 is a binding site for dimethylallyl diphosphate. Histidine 132 is an isopentenyl diphosphate binding site. Residue glutamate 134 is the Proton donor of the active site. (2E)-4-hydroxy-3-methylbut-2-enyl diphosphate is bound at residue threonine 172. Cysteine 202 is a [4Fe-4S] cluster binding site. Serine 230, serine 231, asparagine 232, and serine 274 together coordinate (2E)-4-hydroxy-3-methylbut-2-enyl diphosphate. Dimethylallyl diphosphate contacts are provided by serine 230, serine 231, asparagine 232, and serine 274. Residues serine 230, serine 231, asparagine 232, and serine 274 each contribute to the isopentenyl diphosphate site.

Belongs to the IspH family. It depends on [4Fe-4S] cluster as a cofactor.

The catalysed reaction is isopentenyl diphosphate + 2 oxidized [2Fe-2S]-[ferredoxin] + H2O = (2E)-4-hydroxy-3-methylbut-2-enyl diphosphate + 2 reduced [2Fe-2S]-[ferredoxin] + 2 H(+). The enzyme catalyses dimethylallyl diphosphate + 2 oxidized [2Fe-2S]-[ferredoxin] + H2O = (2E)-4-hydroxy-3-methylbut-2-enyl diphosphate + 2 reduced [2Fe-2S]-[ferredoxin] + 2 H(+). Its pathway is isoprenoid biosynthesis; dimethylallyl diphosphate biosynthesis; dimethylallyl diphosphate from (2E)-4-hydroxy-3-methylbutenyl diphosphate: step 1/1. It functions in the pathway isoprenoid biosynthesis; isopentenyl diphosphate biosynthesis via DXP pathway; isopentenyl diphosphate from 1-deoxy-D-xylulose 5-phosphate: step 6/6. Its function is as follows. Catalyzes the conversion of 1-hydroxy-2-methyl-2-(E)-butenyl 4-diphosphate (HMBPP) into a mixture of isopentenyl diphosphate (IPP) and dimethylallyl diphosphate (DMAPP). Acts in the terminal step of the DOXP/MEP pathway for isoprenoid precursor biosynthesis. This chain is 4-hydroxy-3-methylbut-2-enyl diphosphate reductase, found in Polaromonas sp. (strain JS666 / ATCC BAA-500).